The chain runs to 118 residues: Non-specific lipid-transfer protein 1 (118 aa).

The first 25 residues, 1–25, serve as a signal peptide directing secretion; the sequence is MASLRVSCLVALMCMVVISAPMAEA. 4 cysteine pairs are disulfide-bonded: Cys29–Cys76, Cys39–Cys53, Cys54–Cys99, and Cys74–Cys113.

It belongs to the plant LTP family.

Functionally, plant non-specific lipid-transfer proteins transfer phospholipids as well as galactolipids across membranes. May play a role in wax or cutin deposition in the cell walls of expanding epidermal cells and certain secretory tissues. The polypeptide is Non-specific lipid-transfer protein 1 (Lens culinaris (Lentil)).